Consider the following 180-residue polypeptide: Small ribosomal subunit protein uS4 (180 aa).

The S4 RNA-binding domain maps to 103–174 (RRLQTLVFKK…HPERMVIEEV (72 aa)).

It belongs to the universal ribosomal protein uS4 family. As to quaternary structure, part of the 30S ribosomal subunit. Contacts protein S5. The interaction surface between S4 and S5 is involved in control of translational fidelity.

One of the primary rRNA binding proteins, it binds directly to 16S rRNA where it nucleates assembly of the body of the 30S subunit. Its function is as follows. With S5 and S12 plays an important role in translational accuracy. This chain is Small ribosomal subunit protein uS4, found in Thermococcus sibiricus (strain DSM 12597 / MM 739).